The chain runs to 630 residues: 1-deoxy-D-xylulose-5-phosphate synthase (630 aa).

Thiamine diphosphate is bound by residues H87 and 128–130 (GHS). Residue D159 coordinates Mg(2+). Thiamine diphosphate is bound by residues 160-161 (GA), N188, F295, and E377. N188 contributes to the Mg(2+) binding site.

It belongs to the transketolase family. DXPS subfamily. Homodimer. It depends on Mg(2+) as a cofactor. Thiamine diphosphate serves as cofactor.

It carries out the reaction D-glyceraldehyde 3-phosphate + pyruvate + H(+) = 1-deoxy-D-xylulose 5-phosphate + CO2. The protein operates within metabolic intermediate biosynthesis; 1-deoxy-D-xylulose 5-phosphate biosynthesis; 1-deoxy-D-xylulose 5-phosphate from D-glyceraldehyde 3-phosphate and pyruvate: step 1/1. Functionally, catalyzes the acyloin condensation reaction between C atoms 2 and 3 of pyruvate and glyceraldehyde 3-phosphate to yield 1-deoxy-D-xylulose-5-phosphate (DXP). In Pseudomonas savastanoi pv. phaseolicola (strain 1448A / Race 6) (Pseudomonas syringae pv. phaseolicola (strain 1448A / Race 6)), this protein is 1-deoxy-D-xylulose-5-phosphate synthase.